A 1035-amino-acid polypeptide reads, in one-letter code: Putative protein FAM47C (1035 aa).

2 disordered regions span residues 1 to 21 (MGDQ…TPWY) and 159 to 797 (LEDA…RRVS). Over residues 159-173 (LEDAGSCEGQEKTTD) the composition is skewed to basic and acidic residues. Positions 380-392 (PEPPKTRVPPLRP) are enriched in pro residues. Positions 478–490 (PPEKDVSHLRPEP) are enriched in basic and acidic residues. Polar residues predominate over residues 533–544 (SLHQAPPESSVS). Composition is skewed to basic and acidic residues over residues 611–622 (PETRVSHLRPEP), 683–694 (PETRVSHLRPEP), and 753–766 (EPLE…RPEP).

This sequence belongs to the FAM47 family.

This chain is Putative protein FAM47C (FAM47C), found in Homo sapiens (Human).